A 136-amino-acid chain; its full sequence is NADPH-dependent 7-cyano-7-deazaguanine reductase (136 aa).

Cys50 serves as the catalytic Thioimide intermediate. Asp57 acts as the Proton donor in catalysis. Residues 72-74 and 91-92 each bind substrate; these read YEL and HE.

It belongs to the GTP cyclohydrolase I family. QueF type 1 subfamily.

The protein localises to the cytoplasm. The enzyme catalyses 7-aminomethyl-7-carbaguanine + 2 NADP(+) = 7-cyano-7-deazaguanine + 2 NADPH + 3 H(+). It functions in the pathway tRNA modification; tRNA-queuosine biosynthesis. Its function is as follows. Catalyzes the NADPH-dependent reduction of 7-cyano-7-deazaguanine (preQ0) to 7-aminomethyl-7-deazaguanine (preQ1). The polypeptide is NADPH-dependent 7-cyano-7-deazaguanine reductase (Prochlorococcus marinus (strain AS9601)).